A 142-amino-acid chain; its full sequence is Galactose-binding lectin (142 aa).

Positions 1–141 constitute a Galectin domain; that stretch reads TYAEVESFGV…GTDIWDLLLL (141 aa).

As to quaternary structure, homotetramer.

Its activity is regulated as follows. Cytotoxic activity against L.infantum promastigotes is completely inhibited by D-galactose. Inhibition activity against biofilm formation by S.aureus and S.epidermidis is inhibited by alpha-lactose. Hemagglutination activity is inhibited by alpha-lactose (MIC=100 mM), beta-lactose (MIC=100 mM), lactulose (MIC=100 mM), bovine submaxillary mucin (BSM) (MIC=32 ug/ml), fetuin (MIC=16 ug/ml), porcine stomach mucin (PSM) type 2 (MIC=8 ug/ml) and PSM type 3 (MIC=8 ug/ml). In terms of biological role, galactose-binding lectin. Displays antibacterial and hemagglutinin activity. Inhibits the growth of L.infantum promastigotes by damaging their membrane integrity and inducing cell apoptosis via the production of reactive oxygen species (ROS). Inhibition of L.infantum promastigotes appears to increase with time (MIC=1.2 uM/ml after 24 hours, MIC=0.9 uM/ml after 48 hours and MIC=0.6 uM/ml after 72 hours). Agglutinates Gram-negative and Gram-positive bacteria including E.coli, S.aureus and S.epidermidis, and inhibits biofilm formation by S.aureus and S.epidermidis. Displays hemagglutination activity towards all types of human erythrocytes (O, A and B) and rabbit erythrocytes. This chain is Galactose-binding lectin, found in Chondrilla caribensis (Chicken liver sponge).